The chain runs to 156 residues: Small ribosomal subunit protein uS7 (156 aa).

It belongs to the universal ribosomal protein uS7 family. Part of the 30S ribosomal subunit. Contacts proteins S9 and S11.

Functionally, one of the primary rRNA binding proteins, it binds directly to 16S rRNA where it nucleates assembly of the head domain of the 30S subunit. Is located at the subunit interface close to the decoding center, probably blocks exit of the E-site tRNA. The chain is Small ribosomal subunit protein uS7 from Methylocella silvestris (strain DSM 15510 / CIP 108128 / LMG 27833 / NCIMB 13906 / BL2).